The primary structure comprises 444 residues: tRNA modification GTPase MnmE (444 aa).

Residues Arg28, Glu86, and Arg126 each contribute to the (6S)-5-formyl-5,6,7,8-tetrahydrofolate site. Residues 224 to 368 enclose the TrmE-type G domain; it reads GFCVVLAGAP…LLDAIQGSAA (145 aa). Asn234 contacts K(+). GTP-binding positions include 234–239, 253–259, and 278–281; these read NAGKST, SDIPGTT, and DTAG. Ser238 is a Mg(2+) binding site. K(+) contacts are provided by Ser253, Ile255, and Thr258. Residue Thr259 coordinates Mg(2+). Lys444 provides a ligand contact to (6S)-5-formyl-5,6,7,8-tetrahydrofolate.

The protein belongs to the TRAFAC class TrmE-Era-EngA-EngB-Septin-like GTPase superfamily. TrmE GTPase family. As to quaternary structure, homodimer. Heterotetramer of two MnmE and two MnmG subunits. K(+) is required as a cofactor.

It localises to the cytoplasm. Its function is as follows. Exhibits a very high intrinsic GTPase hydrolysis rate. Involved in the addition of a carboxymethylaminomethyl (cmnm) group at the wobble position (U34) of certain tRNAs, forming tRNA-cmnm(5)s(2)U34. This chain is tRNA modification GTPase MnmE, found in Methylorubrum populi (strain ATCC BAA-705 / NCIMB 13946 / BJ001) (Methylobacterium populi).